The following is a 1209-amino-acid chain: DNA-directed RNA polymerase subunit beta' (1209 aa).

Zn(2+) is bound by residues Cys-60, Cys-62, Cys-75, and Cys-78. 3 residues coordinate Mg(2+): Asp-450, Asp-452, and Asp-454. Positions 819, 893, 900, and 903 each coordinate Zn(2+).

This sequence belongs to the RNA polymerase beta' chain family. The RNAP catalytic core consists of 2 alpha, 1 beta, 1 beta' and 1 omega subunit. When a sigma factor is associated with the core the holoenzyme is formed, which can initiate transcription. Requires Mg(2+) as cofactor. It depends on Zn(2+) as a cofactor.

It catalyses the reaction RNA(n) + a ribonucleoside 5'-triphosphate = RNA(n+1) + diphosphate. In terms of biological role, DNA-dependent RNA polymerase catalyzes the transcription of DNA into RNA using the four ribonucleoside triphosphates as substrates. The protein is DNA-directed RNA polymerase subunit beta' of Streptococcus mutans serotype c (strain ATCC 700610 / UA159).